Here is an 892-residue protein sequence, read N- to C-terminus: MCVLQLGWKWMQNLIVEVMWTQKEEQKAGINQNLRREEGKPNQQTVWRRAKKRRMNRRARGEAGGRSKKMRMRVRKNRREEERKLSIPGREQQRKTSQRRRSPSSCSSSSDNNSDDESMSEGEMARLKEEVEEKKKLIATLRNKPWRMKRRLKCLKEAQEFVEKFEGALGKGKGRRLYAFKVMMTKKLIKFNRDFENFKTACIPWESRIKEVESHFGSSVASYFIFLRWMYGLNLVLFGFMFGLVVIPELLMGIPYGSIPRKTVPREEQDSAMDFSVLFEFGGYCKYSILFYGFYNNQRTIGFLQFRLPLSYLLVGVGIFGYSLMVVIRTMARNANEGGDGGDEGNFTFCWKLFTSWDYLIGNPETADNKFASTTTSFKESIVDEQENLKDENIHLRRFLRLLANVLILCCLAGSGYLIYAVVKRSQDFAKRDRNELTWLQKNEVEIVMSLLGLVCPPLFEAIAELEDYHPRIALKWQLGRIFALFLGNLYTFLFALFDEVNGKLENEKQIKNQTVWALKEYYANYTLQYNITENIPPPNIAPADVIRGPCWETEVGIEFVKLTVSDIQVTYLTILIGDFLRALIVRFLNYCWCWDLEAGFPSYAEFDISGNVLGLIFNQGMIWMGAFYAPGLVGINVLRLLSSMYYQCWAVMACNVPHERVFKASRSNNFYMGLLLLVLFLSLMPVIYSIMTLPPSFDCGPFSGKDKMYDVITETIDKDLPPFMADIFSYASNPGLIISVVLLMVWLAIYYLNAVSKAYQNSNLELKRKMQMQRDEEKNRRNNKDSTNQVMKDLEDLLPNKSLIPPPSVEETEKPAEQPSKSSKVTGKPGAAASGKGVHVQKDVSLAAANPRAPVTRAPGPRQPGPLPGNPRGPPPGQGMGRGRGGPPPRR.

Residues 29-125 are disordered; the sequence is GINQNLRREE…DESMSEGEMA (97 aa). 2 stretches are compositionally biased toward basic residues: residues 48–58 and 66–77; these read RRAKKRRMNRR and RSKKMRMRVRKN. Low complexity predominate over residues 103-112; the sequence is PSSCSSSSDN. The next 9 membrane-spanning stretches (helical) occupy residues 235-255, 275-295, 308-328, 403-423, 444-464, 482-502, 616-636, 671-691, and 736-756; these read LVLFGFMFGLVVIPELLMGIP, FSVLFEFGGYCKYSILFYGFY, LPLSYLLVGVGIFGYSLMVVI, LANVLILCCLAGSGYLIYAVV, EVEIVMSLLGLVCPPLFEAIA, IFALFLGNLYTFLFALFDEVN, LIFNQGMIWMGAFYAPGLVGI, FYMGLLLLVLFLSLMPVIYSI, and GLIISVVLLMVWLAIYYLNAV. Residues 772–785 show a composition bias toward basic and acidic residues; sequence QMQRDEEKNRRNNK. Disordered regions lie at residues 772-791 and 796-892; these read QMQRDEEKNRRNNKDSTNQV and EDLL…PPRR. Over residues 862–878 the composition is skewed to pro residues; that stretch reads PRQPGPLPGNPRGPPPG.

This sequence belongs to the TMC family. In adults, expression is restricted to the hair cells of inner ear and lateral line organ. Expressed at higher levels in the larval lateral-line neuromasts than in the larval inner ear.

The protein localises to the membrane. Its function is as follows. Probable component of the mechanotransducer (MET) non-selective cation channel. The sequence is that of Transmembrane channel-like protein 2-B from Danio rerio (Zebrafish).